Here is a 476-residue protein sequence, read N- to C-terminus: Aspartyl/glutamyl-tRNA(Asn/Gln) amidotransferase subunit B (476 aa).

It belongs to the GatB/GatE family. GatB subfamily. Heterotrimer of A, B and C subunits.

The catalysed reaction is L-glutamyl-tRNA(Gln) + L-glutamine + ATP + H2O = L-glutaminyl-tRNA(Gln) + L-glutamate + ADP + phosphate + H(+). It catalyses the reaction L-aspartyl-tRNA(Asn) + L-glutamine + ATP + H2O = L-asparaginyl-tRNA(Asn) + L-glutamate + ADP + phosphate + 2 H(+). Allows the formation of correctly charged Asn-tRNA(Asn) or Gln-tRNA(Gln) through the transamidation of misacylated Asp-tRNA(Asn) or Glu-tRNA(Gln) in organisms which lack either or both of asparaginyl-tRNA or glutaminyl-tRNA synthetases. The reaction takes place in the presence of glutamine and ATP through an activated phospho-Asp-tRNA(Asn) or phospho-Glu-tRNA(Gln). The sequence is that of Aspartyl/glutamyl-tRNA(Asn/Gln) amidotransferase subunit B from Solidesulfovibrio magneticus (strain ATCC 700980 / DSM 13731 / RS-1) (Desulfovibrio magneticus).